We begin with the raw amino-acid sequence, 290 residues long: Fructose-1,6-bisphosphatase class 1 (290 aa).

The Mg(2+) site is built by Glu-78, Asp-96, Leu-98, and Asp-99. Substrate is bound by residues 99-102, Tyr-201, and Lys-226; that span reads DGSS. Glu-232 contributes to the Mg(2+) binding site.

It belongs to the FBPase class 1 family. Homotetramer. It depends on Mg(2+) as a cofactor.

The protein localises to the cytoplasm. The enzyme catalyses beta-D-fructose 1,6-bisphosphate + H2O = beta-D-fructose 6-phosphate + phosphate. The protein operates within carbohydrate biosynthesis; gluconeogenesis. The protein is Fructose-1,6-bisphosphatase class 1 of Helicobacter pylori (strain ATCC 700392 / 26695) (Campylobacter pylori).